Here is an 822-residue protein sequence, read N- to C-terminus: Penicillin-binding protein 1A (822 aa).

Residues 1-5 lie on the Cytoplasmic side of the membrane; the sequence is MRLLK. Residues 6–26 traverse the membrane as a helical; Signal-anchor for type II membrane protein segment; the sequence is FLWWTCVTLICGVLLSFSGAY. Residues 27–822 lie on the Periplasmic side of the membrane; the sequence is LYLSPSLPSV…DDEGAPIDLF (796 aa). The segment at 48–216 is transglycosylase; the sequence is LKVYSEDGKL…SRYNPLVNPT (169 aa). E86 serves as the catalytic Proton donor; for transglycosylase activity. A transpeptidase region spans residues 403-744; it reads IRVQRQEDGT…GTVALPIWIR (342 aa). Residue S461 is the Acyl-ester intermediate; for transpeptidase activity of the active site. Disordered regions lie at residues 614-654 and 790-822; these read AADA…FEPT and KNED…IDLF. Residues 812-822 show a composition bias toward acidic residues; the sequence is PDDEGAPIDLF.

In the N-terminal section; belongs to the glycosyltransferase 51 family. This sequence in the C-terminal section; belongs to the transpeptidase family.

The protein resides in the cell inner membrane. It carries out the reaction [GlcNAc-(1-&gt;4)-Mur2Ac(oyl-L-Ala-gamma-D-Glu-L-Lys-D-Ala-D-Ala)](n)-di-trans,octa-cis-undecaprenyl diphosphate + beta-D-GlcNAc-(1-&gt;4)-Mur2Ac(oyl-L-Ala-gamma-D-Glu-L-Lys-D-Ala-D-Ala)-di-trans,octa-cis-undecaprenyl diphosphate = [GlcNAc-(1-&gt;4)-Mur2Ac(oyl-L-Ala-gamma-D-Glu-L-Lys-D-Ala-D-Ala)](n+1)-di-trans,octa-cis-undecaprenyl diphosphate + di-trans,octa-cis-undecaprenyl diphosphate + H(+). It catalyses the reaction Preferential cleavage: (Ac)2-L-Lys-D-Ala-|-D-Ala. Also transpeptidation of peptidyl-alanyl moieties that are N-acyl substituents of D-alanine.. Its pathway is cell wall biogenesis; peptidoglycan biosynthesis. Cell wall formation. Synthesis of cross-linked peptidoglycan from the lipid intermediates. The enzyme has a penicillin-insensitive transglycosylase N-terminal domain (formation of linear glycan strands) and a penicillin-sensitive transpeptidase C-terminal domain (cross-linking of the peptide subunits). This Pseudomonas aeruginosa (strain ATCC 15692 / DSM 22644 / CIP 104116 / JCM 14847 / LMG 12228 / 1C / PRS 101 / PAO1) protein is Penicillin-binding protein 1A (mrcA).